Here is a 412-residue protein sequence, read N- to C-terminus: UV DNA damage endonuclease (412 aa).

It belongs to the uve1/UvsE family.

Component in a DNA repair pathway. Removal of UV LIGHT damaged nucleotides. Recognizes pyrimidine dimers and cleave a phosphodiester bond immediately 5' to the lesion. The sequence is that of UV DNA damage endonuclease from Clostridium perfringens (strain 13 / Type A).